Here is a 217-residue protein sequence, read N- to C-terminus: Small ribosomal subunit protein eS6 (217 aa).

Belongs to the eukaryotic ribosomal protein eS6 family.

This chain is Small ribosomal subunit protein eS6, found in Hyperthermus butylicus (strain DSM 5456 / JCM 9403 / PLM1-5).